The sequence spans 132 residues: MDTKTQSLPNTHAQPHSNSRPQSHACHHCSCSQHCQSRSRSRSCRSRSSSRRPRSHRSPTGRQGQSPGPSPPLRRHRHTMHSHQCPSRPVTHSCSHSKNRKNLEGKVIKRKQVKRSKQVYKRKRQSSGRKYN.

A compositionally biased stretch (polar residues) spans 1 to 20 (MDTKTQSLPNTHAQPHSNSR). A disordered region spans residues 1 to 132 (MDTKTQSLPN…KRQSSGRKYN (132 aa)). Residues His12, His16, His24, Cys29, Cys31, and Cys35 each coordinate Zn(2+). Residues 37–59 (SRSRSRSCRSRSSSRRPRSHRSP) are compositionally biased toward basic residues. Over residues 82 to 94 (SHQCPSRPVTHSC) the composition is skewed to polar residues. The Nuclear localization signal motif lies at 105–113 (GKVIKRKQV). Residues 108–132 (IKRKQVKRSKQVYKRKRQSSGRKYN) show a composition bias toward basic residues. Ser127 carries the phosphoserine modification.

This sequence belongs to the nuclear transition protein 2 family. In terms of tissue distribution, testis.

It is found in the nucleus. The protein localises to the nucleolus. Its subcellular location is the chromosome. Plays a key role in the replacement of histones to protamine in the elongating spermatids of mammals. In condensing spermatids, loaded onto the nucleosomes, where it promotes the recruitment and processing of protamines, which are responsible for histone eviction. In Bos taurus (Bovine), this protein is Nuclear transition protein 2 (TNP2).